A 496-amino-acid chain; its full sequence is Omega-crystallin (496 aa).

This sequence belongs to the aldehyde dehydrogenase family. As to expression, lens.

Omega-crystallins are structural components of squids and octopi eye lens. Contains relatively little if any DHAL activity. This is Omega-crystallin from Enteroctopus dofleini (North Pacific giant octopus).